The following is a 169-amino-acid chain: Ecotin (169 aa).

An N-terminal signal peptide occupies residues 1–21; sequence MKKCSIILASVLLATSINAIA. Residues C76 and C113 are joined by a disulfide bond.

This sequence belongs to the protease inhibitor I11 (ecotin) family. In terms of assembly, homodimer.

It is found in the periplasm. Its function is as follows. General inhibitor of pancreatic serine proteases: inhibits chymotrypsin, trypsin, elastases, factor X, kallikrein as well as a variety of other proteases. In Yersinia pseudotuberculosis serotype O:1b (strain IP 31758), this protein is Ecotin.